A 428-amino-acid chain; its full sequence is Enolase (428 aa).

(2R)-2-phosphoglycerate is bound at residue Gln162. Glu204 acts as the Proton donor in catalysis. 3 residues coordinate Mg(2+): Asp241, Glu282, and Asp309. (2R)-2-phosphoglycerate-binding residues include Lys334, Arg363, Ser364, and Lys385. The active-site Proton acceptor is the Lys334.

Belongs to the enolase family. Mg(2+) serves as cofactor.

It localises to the cytoplasm. The protein localises to the secreted. Its subcellular location is the cell surface. It catalyses the reaction (2R)-2-phosphoglycerate = phosphoenolpyruvate + H2O. It functions in the pathway carbohydrate degradation; glycolysis; pyruvate from D-glyceraldehyde 3-phosphate: step 4/5. In terms of biological role, catalyzes the reversible conversion of 2-phosphoglycerate (2-PG) into phosphoenolpyruvate (PEP). It is essential for the degradation of carbohydrates via glycolysis. In Mycobacterium ulcerans (strain Agy99), this protein is Enolase.